The primary structure comprises 301 residues: Fructokinase (301 aa).

The Zn(2+) site is built by His-165, Cys-181, His-184, and Cys-187.

It belongs to the ROK (NagC/XylR) family. Mg(2+) is required as a cofactor.

The enzyme catalyses D-fructose + ATP = D-fructose 6-phosphate + ADP + H(+). Inhibition by zinc ions. This is Fructokinase (frk) from Zymomonas mobilis subsp. mobilis (strain ATCC 31821 / ZM4 / CP4).